We begin with the raw amino-acid sequence, 448 residues long: Exodeoxyribonuclease 7 large subunit (448 aa).

The protein belongs to the XseA family. In terms of assembly, heterooligomer composed of large and small subunits.

It is found in the cytoplasm. The catalysed reaction is Exonucleolytic cleavage in either 5'- to 3'- or 3'- to 5'-direction to yield nucleoside 5'-phosphates.. In terms of biological role, bidirectionally degrades single-stranded DNA into large acid-insoluble oligonucleotides, which are then degraded further into small acid-soluble oligonucleotides. The protein is Exodeoxyribonuclease 7 large subunit of Photobacterium profundum (strain SS9).